The sequence spans 379 residues: 8-amino-7-oxononanoate synthase (379 aa).

The substrate site is built by arginine 27 and arginine 34. 114-115 is a binding site for pyridoxal 5'-phosphate; that stretch reads GY. Histidine 139 is a substrate binding site. Residues serine 187, 212-215, and 232-235 each bind pyridoxal 5'-phosphate; these read DDAH and TLSK. An N6-(pyridoxal phosphate)lysine modification is found at lysine 235. Residue threonine 344 participates in substrate binding.

The protein belongs to the class-II pyridoxal-phosphate-dependent aminotransferase family. BioF subfamily. Homodimer. Requires pyridoxal 5'-phosphate as cofactor.

The catalysed reaction is 6-carboxyhexanoyl-[ACP] + L-alanine + H(+) = (8S)-8-amino-7-oxononanoate + holo-[ACP] + CO2. Its pathway is cofactor biosynthesis; biotin biosynthesis. Its function is as follows. Catalyzes the decarboxylative condensation of pimeloyl-[acyl-carrier protein] and L-alanine to produce 8-amino-7-oxononanoate (AON), [acyl-carrier protein], and carbon dioxide. This chain is 8-amino-7-oxononanoate synthase, found in Methylobacterium sp. (strain 4-46).